We begin with the raw amino-acid sequence, 347 residues long: Homeobox protein knotted-1-like 9 (347 aa).

A compositionally biased stretch (low complexity) spans 1 to 17; sequence MESFASLAGGGSSSTTA. Disordered regions lie at residues 1-36, 122-145, and 179-206; these read MESFASLAGGGSSSTTARLPELIPPENPDRISPPPL, QQLDAADGHPRRRHEPRRDDDVPD, and DSNCEGTGSSEEEQDTSCPEAEEIDPSD. Positions 22–36 are enriched in pro residues; the sequence is LIPPENPDRISPPPL. Acidic residues predominate over residues 188–203; that stretch reads SEEEQDTSCPEAEEID. The ELK domain occupies 208–228; sequence QLKHQLLMKYGGSLGDLRQAF. The segment at residues 229-293 is a DNA-binding region (homeobox; TALE-type); it reads SKRTKKGKLP…NQRKRHWKPT (65 aa).

It belongs to the TALE/KNOX homeobox family.

It is found in the nucleus. The protein is Homeobox protein knotted-1-like 9 of Oryza sativa subsp. japonica (Rice).